We begin with the raw amino-acid sequence, 49 residues long: Chitin-binding lectin (49 aa).

The Chitin-binding type-1 domain occupies 2–45; that stretch reads DHRCGREATPPGKLCNDGRCCSQWGWCGTTQAYCSGKCQSQCDC. Intrachain disulfides connect Cys5–Cys22, Cys16–Cys28, Cys21–Cys35, and Cys39–Cys43.

Homodimer; disulfide-linked.

Its function is as follows. Chitin-binding lectin which is specific for N-acetylglucosamine oligomers. The sequence is that of Chitin-binding lectin from Viscum album (European mistletoe).